The following is a 219-amino-acid chain: Phosphatidylserine decarboxylase proenzyme (219 aa).

The active-site Schiff-base intermediate with substrate; via pyruvic acid is serine 188. Residue serine 188 is modified to Pyruvic acid (Ser); by autocatalysis.

Belongs to the phosphatidylserine decarboxylase family. PSD-A subfamily. In terms of assembly, heterodimer of a large membrane-associated beta subunit and a small pyruvoyl-containing alpha subunit. Pyruvate serves as cofactor. In terms of processing, is synthesized initially as an inactive proenzyme. Formation of the active enzyme involves a self-maturation process in which the active site pyruvoyl group is generated from an internal serine residue via an autocatalytic post-translational modification. Two non-identical subunits are generated from the proenzyme in this reaction, and the pyruvate is formed at the N-terminus of the alpha chain, which is derived from the carboxyl end of the proenzyme. The post-translation cleavage follows an unusual pathway, termed non-hydrolytic serinolysis, in which the side chain hydroxyl group of the serine supplies its oxygen atom to form the C-terminus of the beta chain, while the remainder of the serine residue undergoes an oxidative deamination to produce ammonia and the pyruvoyl prosthetic group on the alpha chain.

The protein localises to the cell membrane. The catalysed reaction is a 1,2-diacyl-sn-glycero-3-phospho-L-serine + H(+) = a 1,2-diacyl-sn-glycero-3-phosphoethanolamine + CO2. Its pathway is phospholipid metabolism; phosphatidylethanolamine biosynthesis; phosphatidylethanolamine from CDP-diacylglycerol: step 2/2. Functionally, catalyzes the formation of phosphatidylethanolamine (PtdEtn) from phosphatidylserine (PtdSer). This is Phosphatidylserine decarboxylase proenzyme from Citrifermentans bemidjiense (strain ATCC BAA-1014 / DSM 16622 / JCM 12645 / Bem) (Geobacter bemidjiensis).